The following is a 211-amino-acid chain: Endoplasmic reticulum vesicle protein 25 (211 aa).

An N-terminal signal peptide occupies residues 1–19 (MKSIVSVLTLLLLINAVAA). Over 20-180 (LRFVLPAKDK…TNESTNRRVK (161 aa)) the chain is Lumenal. Residues 33–121 (PFCVRDFVKN…TKEIDLSVAI (89 aa)) form the GOLD domain. A helical membrane pass occupies residues 181–201 (FFSVGITLALIALGVWQIIYL). The Cytoplasmic segment spans residues 202–211 (RSYFRSKHII).

This sequence belongs to the EMP24/GP25L family.

Its subcellular location is the endoplasmic reticulum membrane. The protein resides in the golgi apparatus membrane. Constituent of COPII-coated endoplasmic reticulum-derived transport vesicles. Required for efficient transport of a subset of secretory proteins to the Golgi. Facilitates retrograde transport from the Golgi to the endoplasmic reticulum. In Yarrowia lipolytica (strain CLIB 122 / E 150) (Yeast), this protein is Endoplasmic reticulum vesicle protein 25 (ERV25).